The sequence spans 485 residues: Glutamyl-tRNA(Gln) amidotransferase subunit A (485 aa).

Active-site charge relay system residues include Lys-78 and Ser-153. The Acyl-ester intermediate role is filled by Ser-177.

It belongs to the amidase family. GatA subfamily. As to quaternary structure, heterotrimer of A, B and C subunits.

It carries out the reaction L-glutamyl-tRNA(Gln) + L-glutamine + ATP + H2O = L-glutaminyl-tRNA(Gln) + L-glutamate + ADP + phosphate + H(+). Its function is as follows. Allows the formation of correctly charged Gln-tRNA(Gln) through the transamidation of misacylated Glu-tRNA(Gln) in organisms which lack glutaminyl-tRNA synthetase. The reaction takes place in the presence of glutamine and ATP through an activated gamma-phospho-Glu-tRNA(Gln). This chain is Glutamyl-tRNA(Gln) amidotransferase subunit A, found in Bacillus cereus (strain Q1).